A 573-amino-acid polypeptide reads, in one-letter code: Arylsulfatase I (573 aa).

Residues 1–23 (MHALTGLSLVSLLSFGYLSWDWA) form the signal peptide. Positions 56, 57, and 94 each coordinate Ca(2+). The active-site Nucleophile is the Cys94. Cys94 bears the 3-oxoalanine (Cys) mark. Substrate is bound at residue Lys148. His150 is a catalytic residue. His240 contributes to the substrate binding site. Residues Asn277 and Asn289 are each glycosylated (N-linked (GlcNAc...) asparagine). The Ca(2+) site is built by Asp298 and Asn299. Lys316 is a substrate binding site. N-linked (GlcNAc...) asparagine glycans are attached at residues Asn467 and Asn497. A disordered region spans residues 516-550 (FNGGAWGPWASDEEEEEEEEEAGRARSFSRGRRKK). Over residues 526–536 (SDEEEEEEEEE) the composition is skewed to acidic residues.

This sequence belongs to the sulfatase family. The cofactor is Ca(2+). Post-translationally, the oxidation of Cys-94 residue to 3-oxoalanine (also known as C(alpha)-formylglycine) by SUMF1/Sulfatase-modifying factor 1, seems critical for catalytic activity.

The protein localises to the secreted. It is found in the endoplasmic reticulum. Functionally, displays arylsulfatase activity at neutral pH, when co-expressed with SUMF1; arylsulfatase activity is measured in the secretion medium of retinal cell line, but no activity is recorded when measured in cell extracts. This chain is Arylsulfatase I (ARSI), found in Canis lupus familiaris (Dog).